The following is an 86-amino-acid chain: Large ribosomal subunit protein uL23 (86 aa).

Belongs to the universal ribosomal protein uL23 family. As to quaternary structure, part of the 50S ribosomal subunit. Contacts protein L29.

Binds to 23S rRNA. One of the proteins that surrounds the polypeptide exit tunnel on the outside of the ribosome. The protein is Large ribosomal subunit protein uL23 of Thermococcus sibiricus (strain DSM 12597 / MM 739).